We begin with the raw amino-acid sequence, 1023 residues long: 2-oxoglutarate dehydrogenase complex component E1 (1023 aa).

The N-terminal 40 residues, 1-40 (MFHLRTCAAKLRPLTASQTVKTFSQNKPAAIRTFQQIRCY), are a transit peptide targeting the mitochondrion. N6-succinyllysine is present on Lys-74. A Phosphoserine modification is found at Ser-100. Positions 143, 156, and 158 each coordinate Ca(2+). Thiamine diphosphate is bound at residue Arg-312. N6-acetyllysine is present on Lys-401. 3 residues coordinate thiamine diphosphate: Asp-411, Asn-444, and Ile-446. The Mg(2+) site is built by Asp-411, Asn-444, and Ile-446. Lys-534 is covalently cross-linked (Glycyl lysine isopeptide (Lys-Gly) (interchain with G-Cter in ubiquitin)). At Lys-564 the chain carries N6-succinyllysine. Residue Gln-676 participates in thiamine diphosphate binding. The recognized by alloreactive CD8 cytotoxic T-lymphocytes in association with a class I MHC protein stretch occupies residues 933–939 (LSPFPFD). Lys-970 carries the N6-acetyllysine modification.

It belongs to the alpha-ketoglutarate dehydrogenase family. As to quaternary structure, homodimer. The 2-oxoglutarate dehydrogenase complex is composed of OGDH (2-oxoglutarate dehydrogenase; E1), DLST (dihydrolipoamide succinyltransferase; E2), DLD (dihydrolipoamide dehydrogenase; E3) and the assembly factor KGD4. It contains multiple copies of the three enzymatic components (E1, E2 and E3). In the nucleus, the 2-oxoglutarate dehydrogenase complex associates with KAT2A. Interacts with ABHD11; this interaction maintains the functional lipoylation of the 2-oxoglutarate dehydrogenase complex. Thiamine diphosphate serves as cofactor. The cofactor is Mg(2+).

It is found in the mitochondrion. The protein resides in the nucleus. The enzyme catalyses N(6)-[(R)-lipoyl]-L-lysyl-[protein] + 2-oxoglutarate + H(+) = N(6)-[(R)-S(8)-succinyldihydrolipoyl]-L-lysyl-[protein] + CO2. Its activity is regulated as follows. Calcium ions and ADP stimulate, whereas ATP and NADH reduce catalytic activity. Functionally, 2-oxoglutarate dehydrogenase (E1o) component of the 2-oxoglutarate dehydrogenase complex (OGDHC). Participates in the first step, rate limiting for the overall conversion of 2-oxoglutarate to succinyl-CoA and CO(2) catalyzed by the whole OGDHC. Catalyzes the irreversible decarboxylation of 2-oxoglutarate (alpha-ketoglutarate) via the thiamine diphosphate (ThDP) cofactor and subsequent transfer of the decarboxylated acyl intermediate on an oxidized dihydrolipoyl group that is covalently amidated to the E2 enzyme (dihydrolipoyllysine-residue succinyltransferase or DLST). Plays a key role in the Krebs (citric acid) cycle, which is a common pathway for oxidation of fuel molecules, including carbohydrates, fatty acids, and amino acids. Can catalyze the decarboxylation of 2-oxoadipate in vitro, but at a much lower rate than 2-oxoglutarate. Mainly active in the mitochondrion. A fraction of the 2-oxoglutarate dehydrogenase complex also localizes in the nucleus and is required for lysine succinylation of histones: associates with KAT2A on chromatin and provides succinyl-CoA to histone succinyltransferase KAT2A. The sequence is that of 2-oxoglutarate dehydrogenase complex component E1 from Mus musculus (Mouse).